A 141-amino-acid polypeptide reads, in one-letter code: Thioredoxin-like protein SkfH (141 aa).

The 140-residue stretch at 2–141 (KDEQMLTEWP…DKMLKKIAGL (140 aa)) folds into the Thioredoxin domain. The cysteines at positions 41 and 44 are disulfide-linked.

Required for production of the bacteriocin SkfA. The sequence is that of Thioredoxin-like protein SkfH from Bacillus subtilis (strain 168).